A 202-amino-acid chain; its full sequence is Small ribosomal subunit protein uS5 (202 aa).

Residues 1 to 13 show a composition bias toward gly residues; sequence MPGQQRRGGGSGG. Positions 1-31 are disordered; that stretch reads MPGQQRRGGGSGGSDRRERRDRSGSGPAQEK. The span at 14–23 shows a compositional bias: basic and acidic residues; the sequence is SDRRERRDRS. Positions 34 to 97 constitute an S5 DRBM domain; that stretch reads YVERVVAINR…EEAKKHFFKV (64 aa).

The protein belongs to the universal ribosomal protein uS5 family. As to quaternary structure, part of the 30S ribosomal subunit. Contacts proteins S4 and S8.

In terms of biological role, with S4 and S12 plays an important role in translational accuracy. Its function is as follows. Located at the back of the 30S subunit body where it stabilizes the conformation of the head with respect to the body. The sequence is that of Small ribosomal subunit protein uS5 from Frankia casuarinae (strain DSM 45818 / CECT 9043 / HFP020203 / CcI3).